Reading from the N-terminus, the 436-residue chain is Trigger factor (436 aa).

Residues 161-246 form the PPIase FKBP-type domain; it reads EDQLNIDFVG…VNTVSEPKLP (86 aa).

It belongs to the FKBP-type PPIase family. Tig subfamily.

Its subcellular location is the cytoplasm. It catalyses the reaction [protein]-peptidylproline (omega=180) = [protein]-peptidylproline (omega=0). Its function is as follows. Involved in protein export. Acts as a chaperone by maintaining the newly synthesized protein in an open conformation. Functions as a peptidyl-prolyl cis-trans isomerase. The protein is Trigger factor of Pseudomonas fluorescens (strain Pf0-1).